A 738-amino-acid chain; its full sequence is 1,4-alpha-glucan branching enzyme GlgB (738 aa).

The active-site Nucleophile is the Asp-399. Glu-452 functions as the Proton donor in the catalytic mechanism.

This sequence belongs to the glycosyl hydrolase 13 family. GlgB subfamily. As to quaternary structure, monomer.

It catalyses the reaction Transfers a segment of a (1-&gt;4)-alpha-D-glucan chain to a primary hydroxy group in a similar glucan chain.. Its pathway is glycan biosynthesis; glycogen biosynthesis. In terms of biological role, catalyzes the formation of the alpha-1,6-glucosidic linkages in glycogen by scission of a 1,4-alpha-linked oligosaccharide from growing alpha-1,4-glucan chains and the subsequent attachment of the oligosaccharide to the alpha-1,6 position. The chain is 1,4-alpha-glucan branching enzyme GlgB from Chlamydia trachomatis serovar D (strain ATCC VR-885 / DSM 19411 / UW-3/Cx).